Consider the following 328-residue polypeptide: Tetraacyldisaccharide 4'-kinase (328 aa).

55–62 (TAGGNGKT) is a binding site for ATP.

Belongs to the LpxK family.

The enzyme catalyses a lipid A disaccharide + ATP = a lipid IVA + ADP + H(+). It participates in glycolipid biosynthesis; lipid IV(A) biosynthesis; lipid IV(A) from (3R)-3-hydroxytetradecanoyl-[acyl-carrier-protein] and UDP-N-acetyl-alpha-D-glucosamine: step 6/6. In terms of biological role, transfers the gamma-phosphate of ATP to the 4'-position of a tetraacyldisaccharide 1-phosphate intermediate (termed DS-1-P) to form tetraacyldisaccharide 1,4'-bis-phosphate (lipid IVA). The protein is Tetraacyldisaccharide 4'-kinase of Escherichia coli O127:H6 (strain E2348/69 / EPEC).